A 355-amino-acid polypeptide reads, in one-letter code: Peptide chain release factor 1 (355 aa).

An N5-methylglutamine modification is found at Gln233.

The protein belongs to the prokaryotic/mitochondrial release factor family. In terms of processing, methylated by PrmC. Methylation increases the termination efficiency of RF1.

It localises to the cytoplasm. Its function is as follows. Peptide chain release factor 1 directs the termination of translation in response to the peptide chain termination codons UAG and UAA. The protein is Peptide chain release factor 1 of Bacillus anthracis.